Reading from the N-terminus, the 214-residue chain is Putative F-box protein At5g15670 (214 aa).

Residues 22–68 enclose the F-box domain; that stretch reads RNKFDEIPHDLVIEILGRLPAKSVARFLTVSKLWATSIRSLDFIKSY.

The polypeptide is Putative F-box protein At5g15670 (Arabidopsis thaliana (Mouse-ear cress)).